A 429-amino-acid chain; its full sequence is Enolase (429 aa).

A (2R)-2-phosphoglycerate-binding site is contributed by Q163. Residue E205 is the Proton donor of the active site. Residues D242, E286, and D313 each contribute to the Mg(2+) site. The (2R)-2-phosphoglycerate site is built by K338, R367, S368, and K389. K338 serves as the catalytic Proton acceptor.

Belongs to the enolase family. Mg(2+) is required as a cofactor.

It is found in the cytoplasm. The protein resides in the secreted. Its subcellular location is the cell surface. It carries out the reaction (2R)-2-phosphoglycerate = phosphoenolpyruvate + H2O. It functions in the pathway carbohydrate degradation; glycolysis; pyruvate from D-glyceraldehyde 3-phosphate: step 4/5. Its function is as follows. Catalyzes the reversible conversion of 2-phosphoglycerate (2-PG) into phosphoenolpyruvate (PEP). It is essential for the degradation of carbohydrates via glycolysis. The protein is Enolase of Geobacter metallireducens (strain ATCC 53774 / DSM 7210 / GS-15).